We begin with the raw amino-acid sequence, 320 residues long: L-lactate dehydrogenase (320 aa).

NAD(+)-binding positions include Val18, Asp39, Arg44, Tyr69, and 83–84; that span reads GA. Substrate contacts are provided by Gln86 and Arg92. NAD(+)-binding positions include Thr105, 122 to 124, and Ser147; that span reads AAN. Residue 124–127 coordinates substrate; sequence NPVD. 152 to 155 lines the substrate pocket; the sequence is DSAR. His179 acts as the Proton acceptor in catalysis. Tyr223 carries the post-translational modification Phosphotyrosine. A substrate-binding site is contributed by Thr232.

It belongs to the LDH/MDH superfamily. LDH family. In terms of assembly, homotetramer.

It is found in the cytoplasm. It catalyses the reaction (S)-lactate + NAD(+) = pyruvate + NADH + H(+). It participates in fermentation; pyruvate fermentation to lactate; (S)-lactate from pyruvate: step 1/1. In terms of biological role, catalyzes the conversion of lactate to pyruvate. The protein is L-lactate dehydrogenase of Pediococcus pentosaceus (strain ATCC 25745 / CCUG 21536 / LMG 10740 / 183-1w).